The primary structure comprises 342 residues: Farnesyl pyrophosphate synthase 1 (342 aa).

Isopentenyl diphosphate-binding residues include Lys48, Arg51, and Gln86. Residues Asp93 and Asp97 each contribute to the Mg(2+) site. A dimethylallyl diphosphate-binding site is contributed by Arg102. Arg103 is an isopentenyl diphosphate binding site. Residues Lys190, Thr191, Gln229, Lys246, and Lys255 each contribute to the dimethylallyl diphosphate site.

Belongs to the FPP/GGPP synthase family. Requires Mg(2+) as cofactor.

It localises to the cytoplasm. It catalyses the reaction isopentenyl diphosphate + dimethylallyl diphosphate = (2E)-geranyl diphosphate + diphosphate. The catalysed reaction is isopentenyl diphosphate + (2E)-geranyl diphosphate = (2E,6E)-farnesyl diphosphate + diphosphate. It participates in isoprenoid biosynthesis; farnesyl diphosphate biosynthesis; farnesyl diphosphate from geranyl diphosphate and isopentenyl diphosphate: step 1/1. The protein operates within isoprenoid biosynthesis; geranyl diphosphate biosynthesis; geranyl diphosphate from dimethylallyl diphosphate and isopentenyl diphosphate: step 1/1. Its function is as follows. Catalyzes the sequential condensation of isopentenyl pyrophosphate with the allylic pyrophosphates, dimethylallyl pyrophosphate, and then with the resultant geranylpyrophosphate to the ultimate product farnesyl pyrophosphate. This Parthenium argentatum (Guayule rubber plant) protein is Farnesyl pyrophosphate synthase 1 (FPS1).